A 78-amino-acid polypeptide reads, in one-letter code: Large ribosomal subunit protein bL28 (78 aa).

Belongs to the bacterial ribosomal protein bL28 family.

This chain is Large ribosomal subunit protein bL28, found in Prochlorococcus marinus (strain MIT 9515).